Here is a 356-residue protein sequence, read N- to C-terminus: Glucose 1-dehydrogenase (356 aa).

The segment at 1 to 26 is disordered; the sequence is MDAIVVSKADRTPRLVDRPRPDPTPG. Positions 8–21 are enriched in basic and acidic residues; that stretch reads KADRTPRLVDRPRP. Asp38 lines the Zn(2+) pocket. Residue Thr40 coordinates substrate. Zn(2+) contacts are provided by His63 and Glu64. The disordered stretch occupies residues 86 to 107; sequence TVRRPRGDPTPQFDRGQPDMAA. Residues Glu113 and Glu149 each contribute to the substrate site. Position 149 (Glu149) interacts with Zn(2+). Residues 180–183, 205–206, 270–272, and 300–302 each bind NADP(+); these read NGSL, RR, LGV, and SVN. Asn302 contributes to the substrate binding site.

It belongs to the zinc-containing alcohol dehydrogenase family. Glucose 1-dehydrogenase subfamily. Zn(2+) serves as cofactor.

The enzyme catalyses D-glucose + NAD(+) = D-glucono-1,5-lactone + NADH + H(+). It carries out the reaction D-glucose + NADP(+) = D-glucono-1,5-lactone + NADPH + H(+). Catalyzes the NAD(P)(+)-dependent oxidation of D-glucose to D-gluconate via gluconolactone. Can utilize both NAD(+) and NADP(+) as electron acceptor. Is involved in the degradation of glucose through a modified Entner-Doudoroff pathway. The polypeptide is Glucose 1-dehydrogenase (Halobacterium salinarum (strain ATCC 700922 / JCM 11081 / NRC-1) (Halobacterium halobium)).